The sequence spans 188 residues: Protein SSX5 (188 aa).

Residues 20–83 (KMQKAFDDIA…KRVADFQGND (64 aa)) form the KRAB-related domain. Positions 78–188 (DFQGNDFDND…EISDPQEDDE (111 aa)) are disordered. Residues 112–122 (TPEKPAEEGND) are compositionally biased toward basic and acidic residues. Residues 144-155 (KLNTSEKVNKTS) are compositionally biased toward polar residues. Basic residues predominate over residues 156–170 (GPKRGKHAWTHRVRE). A compositionally biased stretch (acidic residues) spans 179-188 (EISDPQEDDE).

The protein belongs to the SSX family.

Functionally, could act as a modulator of transcription. This chain is Protein SSX5 (SSX5), found in Homo sapiens (Human).